Consider the following 325-residue polypeptide: Beta-ketoacyl-[acyl-carrier-protein] synthase III (325 aa).

Active-site residues include Cys119 and His252. The interval 253 to 257 (QANLR) is ACP-binding. Asn282 is an active-site residue.

The protein belongs to the thiolase-like superfamily. FabH family. As to quaternary structure, homodimer.

The protein localises to the cytoplasm. It catalyses the reaction malonyl-[ACP] + acetyl-CoA + H(+) = 3-oxobutanoyl-[ACP] + CO2 + CoA. It participates in lipid metabolism; fatty acid biosynthesis. Functionally, catalyzes the condensation reaction of fatty acid synthesis by the addition to an acyl acceptor of two carbons from malonyl-ACP. Catalyzes the first condensation reaction which initiates fatty acid synthesis and may therefore play a role in governing the total rate of fatty acid production. Possesses both acetoacetyl-ACP synthase and acetyl transacylase activities. Its substrate specificity determines the biosynthesis of branched-chain and/or straight-chain of fatty acids. The polypeptide is Beta-ketoacyl-[acyl-carrier-protein] synthase III (Polaromonas naphthalenivorans (strain CJ2)).